The primary structure comprises 120 residues: Small ribosomal subunit protein uS13 (120 aa).

The disordered stretch occupies residues 93–120; sequence RKGLPVRGQTTKNNARTRKGKKKTVGSK. Residues 107-120 show a composition bias toward basic residues; the sequence is ARTRKGKKKTVGSK.

Belongs to the universal ribosomal protein uS13 family. As to quaternary structure, part of the 30S ribosomal subunit. Forms a loose heterodimer with protein S19. Forms two bridges to the 50S subunit in the 70S ribosome.

Located at the top of the head of the 30S subunit, it contacts several helices of the 16S rRNA. In the 70S ribosome it contacts the 23S rRNA (bridge B1a) and protein L5 of the 50S subunit (bridge B1b), connecting the 2 subunits; these bridges are implicated in subunit movement. Contacts the tRNAs in the A and P-sites. The sequence is that of Small ribosomal subunit protein uS13 from Helicobacter acinonychis (strain Sheeba).